Here is a 156-residue protein sequence, read N- to C-terminus: Hydrogenase 3 maturation protease (156 aa).

The Ni(2+) site is built by Asp-16, Asp-62, and His-90.

This sequence belongs to the peptidase A31 family. In terms of assembly, monomer.

The catalysed reaction is This enzyme specifically removes a 32-amino acid peptide from the C-terminus of the precursor of the large subunit of E.coli hydrogenase 3 by cleavage at the C-terminal side of Arg-537.. Its function is as follows. Protease involved in the C-terminal processing of HycE, the large subunit of hydrogenase 3. This Escherichia coli O157:H7 protein is Hydrogenase 3 maturation protease (hycI).